Here is a 611-residue protein sequence, read N- to C-terminus: tRNA uridine 5-carboxymethylaminomethyl modification enzyme MnmG (611 aa).

14 to 19 contacts FAD; that stretch reads GAGHAG. NAD(+) is bound at residue 274-288; that stretch reads GPRYCPSIEDKIVKF.

Belongs to the MnmG family. Homodimer. Heterotetramer of two MnmE and two MnmG subunits. The cofactor is FAD.

Its subcellular location is the cytoplasm. NAD-binding protein involved in the addition of a carboxymethylaminomethyl (cmnm) group at the wobble position (U34) of certain tRNAs, forming tRNA-cmnm(5)s(2)U34. The polypeptide is tRNA uridine 5-carboxymethylaminomethyl modification enzyme MnmG (Chlamydia felis (strain Fe/C-56) (Chlamydophila felis)).